The sequence spans 276 residues: Type II pantothenate kinase (276 aa).

Position 8–15 (8–15 (DAGGTLTK)) interacts with ATP. The active-site Proton acceptor is Glu-76. ATP contacts are provided by residues Thr-105, 127 to 131 (GGTIM), Phe-143, and Ser-230.

It belongs to the type II pantothenate kinase family. As to quaternary structure, homodimer.

It is found in the cytoplasm. It carries out the reaction (R)-pantothenate + ATP = (R)-4'-phosphopantothenate + ADP + H(+). It participates in cofactor biosynthesis; coenzyme A biosynthesis; CoA from (R)-pantothenate: step 1/5. Functionally, catalyzes the phosphorylation of pantothenate (Pan), the first step in CoA biosynthesis. The sequence is that of Type II pantothenate kinase from Bacillus cereus (strain ATCC 10987 / NRS 248).